The primary structure comprises 187 residues: Dihydrofolate reductase (187 aa).

Residues 4 to 185 (PLNCIVAVSQ…IKYKFEVYEK (182 aa)) enclose the DHFR domain. NADP(+) contacts are provided by residues Ala-10 and 16-22 (GIGKNGD). 31–36 (EFKYFQ) contacts substrate. The residue at position 33 (Lys-33) is an N6-acetyllysine; alternate. Lys-33 is subject to N6-succinyllysine; alternate. An NADP(+)-binding site is contributed by 55–57 (RKT). Arg-71 serves as a coordination point for substrate. Residues 77-79 (SRE) and 117-124 (GGSSVYQE) each bind NADP(+).

The protein belongs to the dihydrofolate reductase family. Homodimer.

It is found in the mitochondrion. It localises to the cytoplasm. It carries out the reaction (6S)-5,6,7,8-tetrahydrofolate + NADP(+) = 7,8-dihydrofolate + NADPH + H(+). It participates in cofactor biosynthesis; tetrahydrofolate biosynthesis; 5,6,7,8-tetrahydrofolate from 7,8-dihydrofolate: step 1/1. Key enzyme in folate metabolism. Contributes to the de novo mitochondrial thymidylate biosynthesis pathway. Catalyzes an essential reaction for de novo glycine and purine synthesis, and for DNA precursor synthesis. Binds its own mRNA. This is Dihydrofolate reductase (Dhfr) from Rattus norvegicus (Rat).